A 412-amino-acid polypeptide reads, in one-letter code: Multifunctional CCA protein (412 aa).

The ATP site is built by G8 and R11. Positions 8 and 11 each coordinate CTP. Mg(2+) contacts are provided by E21 and D23. ATP-binding residues include R91, R137, and R140. 3 residues coordinate CTP: R91, R137, and R140. Residues 228 to 329 (TGIHTLMTLA…LKLFNAIDVW (102 aa)) enclose the HD domain.

Belongs to the tRNA nucleotidyltransferase/poly(A) polymerase family. Bacterial CCA-adding enzyme type 1 subfamily. In terms of assembly, monomer. Can also form homodimers and oligomers. Mg(2+) serves as cofactor. Requires Ni(2+) as cofactor.

The enzyme catalyses a tRNA precursor + 2 CTP + ATP = a tRNA with a 3' CCA end + 3 diphosphate. It carries out the reaction a tRNA with a 3' CCA end + 2 CTP + ATP = a tRNA with a 3' CCACCA end + 3 diphosphate. Functionally, catalyzes the addition and repair of the essential 3'-terminal CCA sequence in tRNAs without using a nucleic acid template. Adds these three nucleotides in the order of C, C, and A to the tRNA nucleotide-73, using CTP and ATP as substrates and producing inorganic pyrophosphate. tRNA 3'-terminal CCA addition is required both for tRNA processing and repair. Also involved in tRNA surveillance by mediating tandem CCA addition to generate a CCACCA at the 3' terminus of unstable tRNAs. While stable tRNAs receive only 3'-terminal CCA, unstable tRNAs are marked with CCACCA and rapidly degraded. The protein is Multifunctional CCA protein of Yersinia pestis.